We begin with the raw amino-acid sequence, 642 residues long: Threonine--tRNA ligase (642 aa).

Residues 1 to 61 (MPVITLPDGS…ENDTQLSIIT (61 aa)) form the TGS domain. A catalytic region spans residues 243 to 534 (DHRKIGKQLD…LTEEFAGFFP (292 aa)). At Lys-286 the chain carries N6-acetyllysine. Cys-334, His-385, and His-511 together coordinate Zn(2+).

It belongs to the class-II aminoacyl-tRNA synthetase family. In terms of assembly, homodimer. The cofactor is Zn(2+).

The protein localises to the cytoplasm. The catalysed reaction is tRNA(Thr) + L-threonine + ATP = L-threonyl-tRNA(Thr) + AMP + diphosphate + H(+). Catalyzes the attachment of threonine to tRNA(Thr) in a two-step reaction: L-threonine is first activated by ATP to form Thr-AMP and then transferred to the acceptor end of tRNA(Thr). Also edits incorrectly charged L-seryl-tRNA(Thr). The chain is Threonine--tRNA ligase from Shigella dysenteriae serotype 1 (strain Sd197).